Reading from the N-terminus, the 564-residue chain is 4-hydroxybutyrate--CoA ligase 1 (564 aa).

A helical membrane pass occupies residues 105–125 (VHPMHWAVFLAVIKGGFVMVP). Residues 204-212 (TSGTTGMPK), 343-348 (DFYGQT), D429, and R444 each bind ATP. Substrate is bound at residue T348. Residue 452–454 (SDY) coordinates CoA. R455 is a binding site for substrate. CoA contacts are provided by residues R484, K513, and 521 to 523 (VPR). K538 is an ATP binding site.

The protein belongs to the ATP-dependent AMP-binding enzyme family. Mg(2+) serves as cofactor. The cofactor is Mn(2+).

Its subcellular location is the membrane. The catalysed reaction is 4-hydroxybutanoate + ATP + CoA = 4-hydroxybutanoyl-CoA + AMP + diphosphate. It carries out the reaction acetate + ATP + CoA = acetyl-CoA + AMP + diphosphate. The enzyme catalyses propanoate + ATP + CoA = propanoyl-CoA + AMP + diphosphate. It catalyses the reaction a medium-chain fatty acid + ATP + CoA = a medium-chain fatty acyl-CoA + AMP + diphosphate. Involved in the 3-hydroxypropionate/4-hydroxybutyrate cycle which incorporates carbon dioxide into cellular carbon. Catalyzes the ligation of coenzyme A (CoA) to 4-hydroxybutyrate (4HB). It can also use butyrate, valerate, propionate, acetate and 3-hydroxybutyrate (3HB) as substrates. This chain is 4-hydroxybutyrate--CoA ligase 1, found in Metallosphaera sedula (strain ATCC 51363 / DSM 5348 / JCM 9185 / NBRC 15509 / TH2).